Here is a 777-residue protein sequence, read N- to C-terminus: Hepatocyte growth factor-regulated tyrosine kinase substrate (777 aa).

The region spanning 15 to 143 is the VHS domain; it reads ATSQLLLETD…IMKVEGHVFP (129 aa). The segment at 160–220 adopts an FYVE-type zinc-finger fold; sequence WVDAEECHRC…VCEPCFEQLN (61 aa). 6 residues coordinate Zn(2+): C166, C169, C182, C185, C190, and C193. K207 carries the post-translational modification N6-acetyllysine. Zn(2+) contacts are provided by C212 and C215. The interval 223 to 319 is disordered; it reads AEGKAASTTE…SPVNSSAPLA (97 aa). Positions 225–541 are interaction with SNX1; that stretch reads GKAASTTELP…QRLQEQEKER (317 aa). A UIM domain is found at 258-277; it reads QEEEELQLALALSQSEAEEK. Positions 292 to 311 are enriched in low complexity; the sequence is AEPTPVASSAPPASSLYSSP. 3 positions are modified to phosphotyrosine: Y308, Y329, and Y334. A disordered region spans residues 338–370; it reads KQEEARKSPTPSAPVPLTEPTAQPGEGHAIPAN. The segment at 443 to 541 is interaction with SNAP25 and TRAK2; the sequence is SINTMHPQLL…QRLQEQEKER (99 aa). The tract at residues 452-570 is interaction with STAM; the sequence is LELLNQLDER…FSLPYAQLQA (119 aa). Residues 478-777 form an interaction with NF2 region; it reads ARGALSALRE…GSEAQLISFD (300 aa). K549 is subject to N6-succinyllysine. The segment covering 645–658 has biased composition (low complexity); it reads AAAQGPAGPTTSPA. Disordered stretches follow at residues 645-698 and 712-777; these read AAAQ…YMGS and NLMP…ISFD. 2 stretches are compositionally biased toward polar residues: residues 659–698 and 730–739; these read YSSY…YMGS and PYISGQQPVY. The segment covering 753-777 has biased composition (low complexity); sequence PPVAQQPPAQGPPAQGSEAQLISFD.

Component of the ESCRT-0 complex composed of STAM or STAM2 and HGS. Part of a complex at least composed of HSG, STAM2 (or probably STAM) and EPS15. Interacts with STAM. Interacts with STAM2. Interacts with EPS15; the interaction is direct, calcium-dependent and inhibited by SNAP25. Identified in a complex with STAM and LITAF. Found in a complex with STAM and E3 ligase ITCH and DTX3L. Interacts with E3 ligase DTX3L; the interaction brings together STAM and HSG, promotes their recruitment to early endosomes and decreases STAM and HGS ubiquitination by ITCH. Interacts with NF2; the interaction is direct. Interacts with ubiquitin; the interaction is direct. Interacts with VPS37C. Interacts with SMAD1, SMAD2 and SMAD3. Interacts with TSG101; the interaction mediates the association with the ESCRT-I complex. Interacts with SNAP25; the interaction is direct and decreases with addition of increasing concentrations of free calcium. Interacts with SNX1; the interaction is direct. Component of a 550 kDa membrane complex at least composed of HGS and SNX1 but excluding EGFR. Interacts with TRAK1. Interacts with TRAK2. Component of the CART complex, at least composed of ACTN4, HGS/HRS, MYO5B and TRIM3. Interacts (via UIM domain) with UBQLN1 (via ubiquitin-like domain). Interacts with ARRDC3. Identified in a complex containing at least ARRDC4, AVPR2 and HGS. Interacts with LAPTM4B; promotes HGS ubiquitination. Phosphorylated on Tyr-334. A minor site of phosphorylation on Tyr-329 is detected. Phosphorylation occurs in response to EGF, IL-2, GM-CSF and HGF. In terms of processing, ubiquitinated by ITCH.

The protein resides in the cytoplasm. It localises to the early endosome membrane. The protein localises to the endosome. Its subcellular location is the multivesicular body membrane. Functionally, involved in intracellular signal transduction mediated by cytokines and growth factors. When associated with STAM it suppresses DNA signaling upon stimulation by IL-2 and GM-CSF. Could be a direct effector of PI3-kinase in vesicular pathway via early endosomes and may regulate trafficking to early and late endosomes by recruiting clathrin. May concentrate ubiquitinated receptors within clathrin-coated regions. Involved in down-regulation of receptor tyrosine kinase via multivesicular body (MVBs) when complexed with STAM (ESCRT-0 complex). The ESCRT-0 complex binds ubiquitin and acts as a sorting machinery that recognizes ubiquitinated receptors and transfers them to further sequential lysosomal sorting/trafficking processes. May contribute to the efficient recruitment of SMADs to the activin receptor complex. Involved in receptor recycling via its association with the CART complex, a multiprotein complex required for efficient transferrin receptor recycling but not for EGFR degradation. The polypeptide is Hepatocyte growth factor-regulated tyrosine kinase substrate (HGS) (Bos taurus (Bovine)).